We begin with the raw amino-acid sequence, 426 residues long: uncharacterized protein (426 aa).

Residue H277 coordinates Zn(2+). The active site involves E278. Zn(2+) is bound by residues H281 and E357.

This sequence belongs to the peptidase M48B family. It depends on Zn(2+) as a cofactor.

This is an uncharacterized protein from Bacillus subtilis (strain 168).